Reading from the N-terminus, the 59-residue chain is Large ribosomal subunit protein uL30 (59 aa).

This sequence belongs to the universal ribosomal protein uL30 family. As to quaternary structure, part of the 50S ribosomal subunit.

The chain is Large ribosomal subunit protein uL30 from Actinobacillus pleuropneumoniae serotype 7 (strain AP76).